A 134-amino-acid chain; its full sequence is Holo-[acyl-carrier-protein] synthase (134 aa).

Mg(2+) is bound by residues aspartate 8 and glutamate 56.

The protein belongs to the P-Pant transferase superfamily. AcpS family. It depends on Mg(2+) as a cofactor.

The protein resides in the cytoplasm. It catalyses the reaction apo-[ACP] + CoA = holo-[ACP] + adenosine 3',5'-bisphosphate + H(+). Functionally, transfers the 4'-phosphopantetheine moiety from coenzyme A to a Ser of acyl-carrier-protein. In Clostridium kluyveri (strain ATCC 8527 / DSM 555 / NBRC 12016 / NCIMB 10680 / K1), this protein is Holo-[acyl-carrier-protein] synthase.